The chain runs to 108 residues: Replication restart protein PriB (108 aa).

One can recognise an SSB domain in the interval 11–108; sequence INRNQVIISG…VLHVRDTRII (98 aa).

Belongs to the PriB family. Homodimer. Interacts with PriA and DnaT. Component of the replication restart primosome. Primosome assembly occurs via a 'hand-off' mechanism. PriA binds to replication forks, subsequently PriB then DnaT bind; DnaT then displaces ssDNA to generate the helicase loading substrate.

Functionally, involved in the restart of stalled replication forks, which reloads the replicative helicase on sites other than the origin of replication; the PriA-PriB pathway is the major replication restart pathway. During primosome assembly it facilitates complex formation between PriA and DnaT on DNA; stabilizes PriA on DNA. Stimulates the DNA unwinding activity of PriA helicase. This Nitrosomonas europaea (strain ATCC 19718 / CIP 103999 / KCTC 2705 / NBRC 14298) protein is Replication restart protein PriB.